The primary structure comprises 262 residues: Ribose-5-phosphate isomerase A (262 aa).

Substrate-binding positions include 33–36 (TGST), 89–92 (DGAD), and 102–105 (KGGG). The active-site Proton acceptor is the Glu-111. Substrate is bound at residue Lys-129.

Belongs to the ribose 5-phosphate isomerase family. In terms of assembly, homodimer.

It carries out the reaction aldehydo-D-ribose 5-phosphate = D-ribulose 5-phosphate. The protein operates within carbohydrate degradation; pentose phosphate pathway; D-ribose 5-phosphate from D-ribulose 5-phosphate (non-oxidative stage): step 1/1. Functionally, catalyzes the reversible conversion of ribose-5-phosphate to ribulose 5-phosphate. The protein is Ribose-5-phosphate isomerase A of Cereibacter sphaeroides (strain ATCC 17023 / DSM 158 / JCM 6121 / CCUG 31486 / LMG 2827 / NBRC 12203 / NCIMB 8253 / ATH 2.4.1.) (Rhodobacter sphaeroides).